Consider the following 304-residue polypeptide: UTP--glucose-1-phosphate uridylyltransferase 1 (304 aa).

This sequence belongs to the UDPGP type 2 family.

It catalyses the reaction alpha-D-glucose 1-phosphate + UTP + H(+) = UDP-alpha-D-glucose + diphosphate. The protein operates within carbohydrate metabolism; nucleotide-sugar metabolism. This is UTP--glucose-1-phosphate uridylyltransferase 1 (hasC1) from Streptococcus pyogenes serotype M1.